The chain runs to 352 residues: Glycerol-1-phosphate dehydrogenase [NAD(P)+] (352 aa).

Residues 91–95 (GRVID) and 113–116 (TVAS) each bind NAD(+). Asp-118 contributes to the substrate binding site. NAD(+) is bound at residue Ser-122. Glu-169 contacts substrate. Zn(2+) contacts are provided by Glu-169 and His-249. His-253 contributes to the substrate binding site. A Zn(2+)-binding site is contributed by His-269.

This sequence belongs to the glycerol-1-phosphate dehydrogenase family. As to quaternary structure, homodimer. The cofactor is Zn(2+).

The protein localises to the cytoplasm. The catalysed reaction is sn-glycerol 1-phosphate + NAD(+) = dihydroxyacetone phosphate + NADH + H(+). It carries out the reaction sn-glycerol 1-phosphate + NADP(+) = dihydroxyacetone phosphate + NADPH + H(+). The protein operates within membrane lipid metabolism; glycerophospholipid metabolism. In terms of biological role, catalyzes the NAD(P)H-dependent reduction of dihydroxyacetonephosphate (DHAP or glycerone phosphate) to glycerol 1-phosphate (G1P). The G1P thus generated is used as the glycerophosphate backbone of phospholipids in the cellular membranes of Archaea. This Caldivirga maquilingensis (strain ATCC 700844 / DSM 13496 / JCM 10307 / IC-167) protein is Glycerol-1-phosphate dehydrogenase [NAD(P)+].